Here is a 791-residue protein sequence, read N- to C-terminus: Protein SEY1 (791 aa).

The Cytoplasmic portion of the chain corresponds to 1–685; it reads MSEDGASKCQ…KRSTIKSHTH (685 aa). The GB1/RHD3-type G domain occupies 40-268; it reads GLDYHVISVF…REDYYLSGKY (229 aa). Residue 50–57 participates in GTP binding; it reads GSQSSGKS. A helical transmembrane segment spans residues 686 to 706; the sequence is IPMWIYAIIAVLGWNEFMLVL. Over 707–709 the chain is Lumenal; sequence RNP. Residues 710-730 traverse the membrane as a helical segment; the sequence is LFIALMLLIVGAAYTVHRLNL. At 731-791 the chain is on the cytoplasmic side; that stretch reads WTPLATFASA…NETKENANES (61 aa). The interval 763–791 is disordered; sequence PKNASSKPVESFEMQDLSVNETKENANES.

This sequence belongs to the TRAFAC class dynamin-like GTPase superfamily. GB1/RHD3 GTPase family. RHD3 subfamily.

Its subcellular location is the endoplasmic reticulum membrane. Cooperates with the reticulon proteins and tubule-shaping DP1 family proteins to generate and maintain the structure of the tubular endoplasmic reticulum network. Has GTPase activity, which is required for its function in ER organization. The sequence is that of Protein SEY1 from Eremothecium gossypii (strain ATCC 10895 / CBS 109.51 / FGSC 9923 / NRRL Y-1056) (Yeast).